The following is a 705-amino-acid chain: Elongation factor G (705 aa).

A tr-type G domain is found at 8–294; sequence ELCRNFGIMA…SVIDYLPSPL (287 aa). Residues 17 to 24, 92 to 96, and 146 to 149 contribute to the GTP site; these read AHIDAGKT, DTPGH, and NKMD.

It belongs to the TRAFAC class translation factor GTPase superfamily. Classic translation factor GTPase family. EF-G/EF-2 subfamily.

The protein resides in the cytoplasm. Catalyzes the GTP-dependent ribosomal translocation step during translation elongation. During this step, the ribosome changes from the pre-translocational (PRE) to the post-translocational (POST) state as the newly formed A-site-bound peptidyl-tRNA and P-site-bound deacylated tRNA move to the P and E sites, respectively. Catalyzes the coordinated movement of the two tRNA molecules, the mRNA and conformational changes in the ribosome. In Cereibacter sphaeroides (strain ATCC 17023 / DSM 158 / JCM 6121 / CCUG 31486 / LMG 2827 / NBRC 12203 / NCIMB 8253 / ATH 2.4.1.) (Rhodobacter sphaeroides), this protein is Elongation factor G.